The sequence spans 901 residues: Protein translocase subunit SecA (901 aa).

ATP-binding positions include Q87, G105–T109, and D512. Residues A852–S901 form a disordered region. Zn(2+)-binding residues include C885, C887, C896, and H897. Over residues K891–S901 the composition is skewed to basic residues.

It belongs to the SecA family. In terms of assembly, monomer and homodimer. Part of the essential Sec protein translocation apparatus which comprises SecA, SecYEG and auxiliary proteins SecDF-YajC and YidC. Zn(2+) is required as a cofactor.

Its subcellular location is the cell inner membrane. The protein localises to the cytoplasm. It catalyses the reaction ATP + H2O + cellular proteinSide 1 = ADP + phosphate + cellular proteinSide 2.. Functionally, part of the Sec protein translocase complex. Interacts with the SecYEG preprotein conducting channel. Has a central role in coupling the hydrolysis of ATP to the transfer of proteins into and across the cell membrane, serving both as a receptor for the preprotein-SecB complex and as an ATP-driven molecular motor driving the stepwise translocation of polypeptide chains across the membrane. The polypeptide is Protein translocase subunit SecA (Citrobacter koseri (strain ATCC BAA-895 / CDC 4225-83 / SGSC4696)).